Here is a 66-residue protein sequence, read N- to C-terminus: Large ribosomal subunit protein bL33c (66 aa).

This sequence belongs to the bacterial ribosomal protein bL33 family.

It is found in the plastid. The protein localises to the chloroplast. This Daucus carota (Wild carrot) protein is Large ribosomal subunit protein bL33c.